Consider the following 192-residue polypeptide: Protein FAM169BP (192 aa).

The disordered stretch occupies residues 121–192; the sequence is YQAHPGNSED…PPGKLTRSSP (72 aa). The segment covering 159-177 has biased composition (acidic residues); it reads EELEDTKDDPECGVEEEDA.

The protein belongs to the FAM169 family.

This is Protein FAM169BP from Homo sapiens (Human).